The primary structure comprises 67 residues: DNA-directed RNA polymerase subunit omega (67 aa).

Belongs to the RNA polymerase subunit omega family. As to quaternary structure, the RNAP catalytic core consists of 2 alpha, 1 beta, 1 beta' and 1 omega subunit. When a sigma factor is associated with the core the holoenzyme is formed, which can initiate transcription.

The enzyme catalyses RNA(n) + a ribonucleoside 5'-triphosphate = RNA(n+1) + diphosphate. Functionally, promotes RNA polymerase assembly. Latches the N- and C-terminal regions of the beta' subunit thereby facilitating its interaction with the beta and alpha subunits. This Ralstonia pickettii (strain 12J) protein is DNA-directed RNA polymerase subunit omega.